Consider the following 58-residue polypeptide: MSTYTVTGQFQSRDGFQPFTKDVEAENEDLARERIYTTVGSQHNRKRPQIEIKEVSAA.

Residues threonine 37–alanine 58 form a disordered region. Residues proline 48–alanine 58 are compositionally biased toward basic and acidic residues.

The protein belongs to the eukaryotic ribosomal protein eL20 family. As to quaternary structure, part of the 50S ribosomal subunit. Binds 23S rRNA.

The protein is Large ribosomal subunit protein eL20 of Halorubrum lacusprofundi (strain ATCC 49239 / DSM 5036 / JCM 8891 / ACAM 34).